The chain runs to 113 residues: Large ribosomal subunit protein uL24 (113 aa).

This sequence belongs to the universal ribosomal protein uL24 family. As to quaternary structure, part of the 50S ribosomal subunit.

In terms of biological role, one of two assembly initiator proteins, it binds directly to the 5'-end of the 23S rRNA, where it nucleates assembly of the 50S subunit. Functionally, one of the proteins that surrounds the polypeptide exit tunnel on the outside of the subunit. This Chlamydia felis (strain Fe/C-56) (Chlamydophila felis) protein is Large ribosomal subunit protein uL24.